The sequence spans 180 residues: Stathmin-3 (180 aa).

An SLD domain is found at 38–180; it reads GDMEVKQLDK…NKEQREEISG (143 aa). Over residues 60-74 the composition is skewed to low complexity; sequence SPSDLSPESPILSSP. Residues 60–82 are disordered; sequence SPSDLSPESPILSSPPKKKDLSL. Positions 75–179 form a coiled coil; it reads PKKKDLSLEE…RNKEQREEIS (105 aa).

This sequence belongs to the stathmin family.

This Gallus gallus (Chicken) protein is Stathmin-3 (STMN3).